We begin with the raw amino-acid sequence, 340 residues long: Phosphoribosylformylglycinamidine cyclo-ligase (340 aa).

The protein belongs to the AIR synthase family.

The protein resides in the cytoplasm. It catalyses the reaction 2-formamido-N(1)-(5-O-phospho-beta-D-ribosyl)acetamidine + ATP = 5-amino-1-(5-phospho-beta-D-ribosyl)imidazole + ADP + phosphate + H(+). The protein operates within purine metabolism; IMP biosynthesis via de novo pathway; 5-amino-1-(5-phospho-D-ribosyl)imidazole from N(2)-formyl-N(1)-(5-phospho-D-ribosyl)glycinamide: step 2/2. The sequence is that of Phosphoribosylformylglycinamidine cyclo-ligase from Streptococcus pneumoniae serotype 19F (strain G54).